Reading from the N-terminus, the 1861-residue chain is Protein TANC1 (1861 aa).

An N-acetylmethionine modification is found at Met1. Disordered stretches follow at residues Met1–Pro46, Ser63–Arg99, Lys206–Gly225, Gln257–Pro311, and Gln439–Glu486. Basic and acidic residues predominate over residues Lys8–Gly21. Phosphoserine is present on residues Ser63, Ser66, Ser67, Ser207, and Ser270. A compositionally biased stretch (polar residues) spans Lys206–Leu219. Positions Ile440 to Thr455 are enriched in polar residues. The segment covering Thr461–Leu480 has biased composition (low complexity). At Ser465 the chain carries Phosphoserine. ANK repeat units lie at residues Glu896–Tyr928, Asn934–Gly963, Asn967–His996, Lys1000–Pro1029, Ala1040–Val1069, Trp1078–Arg1107, Arg1111–Leu1140, Gln1144–Ser1173, Glu1177–Gln1206, Asn1210–His1239, and Ser1243–Asn1272. TPR repeat units lie at residues Leu1289 to Glu1322, Val1336 to Ser1369, and Glu1371 to Asn1403. Residues Gln1421–Pro1431 show a composition bias toward low complexity. 2 disordered regions span residues Gln1421 to Ser1485 and Val1636 to Gly1696. Ser1439 is modified (phosphoserine). 2 stretches are compositionally biased toward low complexity: residues Gln1467 to Ser1485 and Ser1659 to Ser1689. A phosphoserine mark is found at Ser1668, Ser1676, and Ser1677.

It belongs to the TANC family. As to quaternary structure, interacts probably directly with DLG1, DLG4, HOMER1. Interacts with DLGAP1, INA, CAMK2A, GRIN2B and GRIA1. Interacts with TNIK. Interacts with MINK1. Post-translationally, phosphorylated; by MINK1 and TNIK upon stimulation by RAP2A.

Its subcellular location is the postsynaptic density. May be a scaffold component in the postsynaptic density. The sequence is that of Protein TANC1 (TANC1) from Homo sapiens (Human).